A 92-amino-acid chain; its full sequence is MARSVWKGPFVDGYLLTKAEKVREGGRNEVIKMWSRRSTILPQFVGLTFGVYNGNKHVPVSISEEMVGHKFGEFAPTRTYYGHGADKKSKRK.

The protein belongs to the universal ribosomal protein uS19 family.

Its function is as follows. Protein S19 forms a complex with S13 that binds strongly to the 16S ribosomal RNA. The protein is Small ribosomal subunit protein uS19 of Brucella anthropi (strain ATCC 49188 / DSM 6882 / CCUG 24695 / JCM 21032 / LMG 3331 / NBRC 15819 / NCTC 12168 / Alc 37) (Ochrobactrum anthropi).